Reading from the N-terminus, the 335-residue chain is Tetraacyldisaccharide 4'-kinase (335 aa).

59–66 serves as a coordination point for ATP; it reads TAGGNGKT.

It belongs to the LpxK family.

The catalysed reaction is a lipid A disaccharide + ATP = a lipid IVA + ADP + H(+). It participates in glycolipid biosynthesis; lipid IV(A) biosynthesis; lipid IV(A) from (3R)-3-hydroxytetradecanoyl-[acyl-carrier-protein] and UDP-N-acetyl-alpha-D-glucosamine: step 6/6. In terms of biological role, transfers the gamma-phosphate of ATP to the 4'-position of a tetraacyldisaccharide 1-phosphate intermediate (termed DS-1-P) to form tetraacyldisaccharide 1,4'-bis-phosphate (lipid IVA). The polypeptide is Tetraacyldisaccharide 4'-kinase (Vibrio parahaemolyticus serotype O3:K6 (strain RIMD 2210633)).